Consider the following 344-residue polypeptide: S-adenosylmethionine:tRNA ribosyltransferase-isomerase (344 aa).

This sequence belongs to the QueA family. In terms of assembly, monomer.

Its subcellular location is the cytoplasm. The enzyme catalyses 7-aminomethyl-7-carbaguanosine(34) in tRNA + S-adenosyl-L-methionine = epoxyqueuosine(34) in tRNA + adenine + L-methionine + 2 H(+). The protein operates within tRNA modification; tRNA-queuosine biosynthesis. Its function is as follows. Transfers and isomerizes the ribose moiety from AdoMet to the 7-aminomethyl group of 7-deazaguanine (preQ1-tRNA) to give epoxyqueuosine (oQ-tRNA). The polypeptide is S-adenosylmethionine:tRNA ribosyltransferase-isomerase (Nitrosococcus oceani (strain ATCC 19707 / BCRC 17464 / JCM 30415 / NCIMB 11848 / C-107)).